A 146-amino-acid polypeptide reads, in one-letter code: Large ribosomal subunit protein uL16 (146 aa).

This sequence belongs to the universal ribosomal protein uL16 family. In terms of assembly, part of the 50S ribosomal subunit.

In terms of biological role, binds 23S rRNA and is also seen to make contacts with the A and possibly P site tRNAs. This Lactobacillus acidophilus (strain ATCC 700396 / NCK56 / N2 / NCFM) protein is Large ribosomal subunit protein uL16.